The primary structure comprises 86 residues: Photosystem I reaction center subunit PsaK 1 (86 aa).

2 helical membrane passes run 14–34 (LSWS…AIAF) and 61–81 (AVLG…LGLA).

The protein belongs to the PsaG/PsaK family.

The protein localises to the cellular thylakoid membrane. The polypeptide is Photosystem I reaction center subunit PsaK 1 (psaK1) (Synechocystis sp. (strain ATCC 27184 / PCC 6803 / Kazusa)).